The sequence spans 570 residues: DNA polymerase/3'-5' exonuclease PolX (570 aa).

The DNA polymerase type-X stretch occupies residues 1–315 (MHKKDIIRLL…PLIPPEIRES (315 aa)). A divalent metal cation is bound by residues Asp193, Asp195, and Asp240. Positions 333–570 (QIKGDLHMHS…DVEAFLKRND (238 aa)) are 3'-5' exonuclease. Positions 339, 341, 371, 410, 437, 465, 526, and 528 each coordinate Mn(2+).

The protein in the N-terminal section; belongs to the DNA polymerase type-X family. In the C-terminal section; belongs to the PHP family. In terms of assembly, monomer. The cofactor is Mn(2+). Mg(2+) is required as a cofactor.

It catalyses the reaction DNA(n) + a 2'-deoxyribonucleoside 5'-triphosphate = DNA(n+1) + diphosphate. It carries out the reaction Exonucleolytic cleavage in the 3'- to 5'-direction to yield nucleoside 5'-phosphates.. Its activity is regulated as follows. The polymerization activity is inhibited in the presence of 2'-3'-dideoxynucleoside 5'-triphosphate (ddNTP). In terms of biological role, strictly DNA-template-directed DNA polymerase, preferentially acting on DNA structures containing gaps from one to a few nucleotides and bearing a phosphate group at the 5' end of the downstream DNA. The fact that PolX is able to conduct filling of a single-nucleotide gap, allowing further sealing of the resulting nick by a DNA ligase, points to a putative role in base excision repair (BER) during the B.subtilis life cycle. Moreover, also possesses a 3'-5' exonuclease activity able to edit unpaired 3'-termini in a gapped DNA substrate and likely involved in resecting unannealed 3'-termini during DNA repair. The same PolX molecule could perform the subsequent gap-filling step. Does not display 5'-deoxyribose 5'-phosphate (dRP) lyase activity, as predicted by the lack of the lysine and tyrosine residues responsible for the dRP lyase activity in some other PolX members. This chain is DNA polymerase/3'-5' exonuclease PolX (polX), found in Bacillus subtilis (strain 168).